The chain runs to 229 residues: Pyridoxal phosphate homeostasis protein (229 aa).

Position 36 is an N6-(pyridoxal phosphate)lysine (lysine 36).

It belongs to the pyridoxal phosphate-binding protein YggS/PROSC family. As to quaternary structure, monomer.

Its function is as follows. Pyridoxal 5'-phosphate (PLP)-binding protein, which is involved in PLP homeostasis. The polypeptide is Pyridoxal phosphate homeostasis protein (Buchnera aphidicola subsp. Schizaphis graminum (strain Sg)).